The following is a 163-amino-acid chain: Transmembrane protein 278 (163 aa).

Positions Met1–Thr37 are disordered. Transmembrane regions (helical) follow at residues Leu51–Leu71 and Ala105–Val125. Over residues Leu136 to Arg148 the composition is skewed to pro residues. The interval Leu136–Asp156 is disordered.

Belongs to the TMEM88 family.

It is found in the membrane. The protein is Transmembrane protein 278 of Homo sapiens (Human).